The following is a 182-amino-acid chain: Guanylate kinase (182 aa).

In terms of domain architecture, Guanylate kinase-like spans 2 to 180 (GTLTVITGPS…ALLKLEGLMG (179 aa)). Position 9-16 (9-16 (GPSGVGKG)) interacts with ATP.

This sequence belongs to the guanylate kinase family.

It is found in the cytoplasm. It carries out the reaction GMP + ATP = GDP + ADP. It catalyses the reaction dZMP + ATP = dZDP + ADP. Its pathway is purine metabolism. Essential for recycling GMP and indirectly, cGMP. Its function is as follows. (Microbial infection) Catalyzes the phosphorylation of dZMP to dZDP, when the bacterium is infected by a phage that produces the substrate for the synthesis of dZTP (2- amino-2'-deoxyadenosine 5'-triphosphate), which is then used by the phage as a DNA polymerase substrate. The polypeptide is Guanylate kinase (Parasynechococcus marenigrum (strain WH8102)).